The primary structure comprises 385 residues: Prostacyclin receptor (385 aa).

Residues 1–16 are Extracellular-facing; the sequence is MADSCRNLTYVRDSVG. 2 disulfide bridges follow: Cys-5-Cys-165 and Cys-92-Cys-170. A glycan (N-linked (GlcNAc...) asparagine) is linked at Asn-7. Residues 17–38 traverse the membrane as a helical segment; it reads PATSTLMFVAGVVGNGLALGIL. Over 39–51 the chain is Cytoplasmic; that stretch reads GARRHSRPSAFAV. Residues 52–76 form a helical membrane-spanning segment; the sequence is LVTGLGVTDLLGTCFLSPAVFAAYA. Over 77 to 94 the chain is Extracellular; the sequence is RNSSLLGLARGRPALCDA. A helical membrane pass occupies residues 95 to 115; sequence FAFAMTFFGLASTLILFAMAV. Over 116 to 134 the chain is Cytoplasmic; it reads ERCLALSHPYLYAQLDGPR. A helical transmembrane segment spans residues 135 to 158; it reads RARLALPAIYAFCTIFCSLPFLGL. At 159–181 the chain is on the extracellular side; it reads GQHQQYCPGSWCFIRMRSAEPGG. Residues 182-208 traverse the membrane as a helical segment; that stretch reads CAFLLAYASLVALLVAAIVLCNGSVTL. The Cytoplasmic portion of the chain corresponds to 209–234; that stretch reads SLCRMYRQQRRHQARCPRPRAGEDEV. Residues 235-259 form a helical membrane-spanning segment; the sequence is DHLILLALMTGIMAVCSLPLTPQIR. The Extracellular portion of the chain corresponds to 260–273; it reads GFTQAIAPDSSEMG. The chain crosses the membrane as a helical span at residues 274–294; sequence DLLAFRFNAFNPILDPWVFIL. Topologically, residues 295–385 are cytoplasmic; that stretch reads FRKSVFQRLK…AGSEAACSLC (91 aa). Residues 315–344 are disordered; sequence AQGDSRTSLSQSASGRKDSSAPPALEGKKG. The segment covering 318–328 has biased composition (polar residues); the sequence is DSRTSLSQSAS. Cys-382 carries the post-translational modification Cysteine methyl ester. Cys-382 carries the S-farnesyl cysteine lipid modification. Residues 383-385 constitute a propeptide, removed in mature form; it reads SLC.

It belongs to the G-protein coupled receptor 1 family. As to quaternary structure, interacts (non-isoprenylated C-terminus) with PDZK1. Isoprenylation does not influence ligand binding but is required for efficient coupling to the effectors adenylyl cyclase and phospholipase C.

The protein resides in the cell membrane. Functionally, receptor for prostacyclin (prostaglandin I2 or PGI2). The activity of this receptor is mediated by G(s) proteins which activate adenylate cyclase. The chain is Prostacyclin receptor (PTGIR) from Bos taurus (Bovine).